The sequence spans 118 residues: Large ribosomal subunit protein uL18 (118 aa).

The segment at 1 to 26 (MISKPDKNKIRQKRHRRVRGKLSGTA) is disordered. A compositionally biased stretch (basic residues) spans 10-20 (IRQKRHRRVRG).

Belongs to the universal ribosomal protein uL18 family. As to quaternary structure, part of the 50S ribosomal subunit; part of the 5S rRNA/L5/L18/L25 subcomplex. Contacts the 5S and 23S rRNAs.

Functionally, this is one of the proteins that bind and probably mediate the attachment of the 5S RNA into the large ribosomal subunit, where it forms part of the central protuberance. The polypeptide is Large ribosomal subunit protein uL18 (Streptococcus equi subsp. zooepidemicus (strain H70)).